The primary structure comprises 558 residues: 2-isopropylmalate synthase (558 aa).

In terms of domain architecture, Pyruvate carboxyltransferase spans 30–303; that stretch reads PIWCSVDLRD…DPGIDCSDIN (274 aa). Mg(2+)-binding residues include aspartate 39, histidine 242, histidine 244, and asparagine 278. Residues 437-558 are regulatory domain; the sequence is QPGARLKFLD…ANRIVGRKAR (122 aa).

Belongs to the alpha-IPM synthase/homocitrate synthase family. LeuA type 2 subfamily. As to quaternary structure, homodimer. Requires Mg(2+) as cofactor.

The protein resides in the cytoplasm. The enzyme catalyses 3-methyl-2-oxobutanoate + acetyl-CoA + H2O = (2S)-2-isopropylmalate + CoA + H(+). Its pathway is amino-acid biosynthesis; L-leucine biosynthesis; L-leucine from 3-methyl-2-oxobutanoate: step 1/4. Functionally, catalyzes the condensation of the acetyl group of acetyl-CoA with 3-methyl-2-oxobutanoate (2-ketoisovalerate) to form 3-carboxy-3-hydroxy-4-methylpentanoate (2-isopropylmalate). In Mesorhizobium japonicum (strain LMG 29417 / CECT 9101 / MAFF 303099) (Mesorhizobium loti (strain MAFF 303099)), this protein is 2-isopropylmalate synthase.